A 427-amino-acid chain; its full sequence is Glutamate-1-semialdehyde 2,1-aminomutase (427 aa).

Lys268 is subject to N6-(pyridoxal phosphate)lysine.

Belongs to the class-III pyridoxal-phosphate-dependent aminotransferase family. HemL subfamily. It depends on pyridoxal 5'-phosphate as a cofactor.

The protein localises to the cytoplasm. It catalyses the reaction (S)-4-amino-5-oxopentanoate = 5-aminolevulinate. It participates in porphyrin-containing compound metabolism; protoporphyrin-IX biosynthesis; 5-aminolevulinate from L-glutamyl-tRNA(Glu): step 2/2. This is Glutamate-1-semialdehyde 2,1-aminomutase from Methanococcus vannielii (strain ATCC 35089 / DSM 1224 / JCM 13029 / OCM 148 / SB).